Consider the following 323-residue polypeptide: Protoheme IX farnesyltransferase (323 aa).

8 helical membrane passes run 28-48 (IIPLLLITTAAAMWIASEGRV), 50-70 (LFTLFITLIGGTLAAAAAQVM), 101-121 (FIFAVILAILSFSLFALFVNL), 122-142 (LSGLLAMSGIVFYMLVYTHLL), 150-170 (IVIGGAAGSIPPLVGWAAVTG), 178-198 (ILFAIIFLWTPPHFWALALMI), 235-255 (FLLVYPLGVSGAVYGGIAIIL), and 282-302 (FSIFYLMLLCTAMVIDSLPLT).

It belongs to the UbiA prenyltransferase family. Protoheme IX farnesyltransferase subfamily.

It is found in the cell inner membrane. It carries out the reaction heme b + (2E,6E)-farnesyl diphosphate + H2O = Fe(II)-heme o + diphosphate. The protein operates within porphyrin-containing compound metabolism; heme O biosynthesis; heme O from protoheme: step 1/1. Functionally, converts heme B (protoheme IX) to heme O by substitution of the vinyl group on carbon 2 of heme B porphyrin ring with a hydroxyethyl farnesyl side group. In Rippkaea orientalis (strain PCC 8801 / RF-1) (Cyanothece sp. (strain PCC 8801)), this protein is Protoheme IX farnesyltransferase.